The sequence spans 282 residues: Benzoyl-CoA reductase subunit D (282 aa).

Residues cysteine 130 and cysteine 169 each contribute to the [4Fe-4S] cluster site.

As to quaternary structure, heterotetramer composed of A, B, C, and D subunits. Requires [4Fe-4S] cluster as cofactor.

It catalyses the reaction cyclohexa-1,5-diene-1-carbonyl-CoA + oxidized 2[4Fe-4S]-[ferredoxin] + 2 ADP + 2 phosphate = reduced 2[4Fe-4S]-[ferredoxin] + benzoyl-CoA + 2 ATP + 2 H2O. It carries out the reaction 3-hydroxybenzoyl-CoA + AH2 + 2 ATP + 2 H2O = 3-hydroxycyclohexa-1,5-diene-1-carbonyl-CoA + A + 2 ADP + 2 phosphate + 2 H(+). Catalyzes the anaerobic reduction of benzoyl-CoA and 3-hydroxybenzoyl-CoA to form cyclohexa-1,5-diene-1-carbonyl-CoA and 3-hydroxycyclohexa-1,5-diene-1-carbonyl-CoA, respectively. The enzyme also reduces other benzoyl-CoA analogs with small substituents at the aromatic ring. The protein is Benzoyl-CoA reductase subunit D (bcrD) of Thauera aromatica.